The chain runs to 307 residues: Aspartate carbamoyltransferase catalytic subunit (307 aa).

Carbamoyl phosphate is bound by residues Arg-54 and Thr-55. An L-aspartate-binding site is contributed by Lys-83. Positions 104, 132, and 135 each coordinate carbamoyl phosphate. Residues Arg-165 and Arg-228 each contribute to the L-aspartate site. Carbamoyl phosphate-binding residues include Leu-267 and Pro-268.

This sequence belongs to the aspartate/ornithine carbamoyltransferase superfamily. ATCase family. As to quaternary structure, heterododecamer (2C3:3R2) of six catalytic PyrB chains organized as two trimers (C3), and six regulatory PyrI chains organized as three dimers (R2).

It catalyses the reaction carbamoyl phosphate + L-aspartate = N-carbamoyl-L-aspartate + phosphate + H(+). Its pathway is pyrimidine metabolism; UMP biosynthesis via de novo pathway; (S)-dihydroorotate from bicarbonate: step 2/3. Its function is as follows. Catalyzes the condensation of carbamoyl phosphate and aspartate to form carbamoyl aspartate and inorganic phosphate, the committed step in the de novo pyrimidine nucleotide biosynthesis pathway. This Clostridium botulinum (strain Langeland / NCTC 10281 / Type F) protein is Aspartate carbamoyltransferase catalytic subunit.